Reading from the N-terminus, the 423-residue chain is Probable sucrose-phosphatase 3b (423 aa).

The protein belongs to the sucrose phosphatase family. Homodimer. It depends on Mg(2+) as a cofactor.

The catalysed reaction is sucrose 6(F)-phosphate + H2O = sucrose + phosphate. It participates in glycan biosynthesis; sucrose biosynthesis; sucrose from D-fructose 6-phosphate and UDP-alpha-D-glucose: step 2/2. Functionally, catalyzes the final step of sucrose synthesis. This is Probable sucrose-phosphatase 3b (SPP3B) from Arabidopsis thaliana (Mouse-ear cress).